The sequence spans 908 residues: MLSALFKKIFGSRNERLVKQYAQNVKAINALEPSMQALTDEQLRAKTEEFKQRYQQGESLEKILPEAFAVVREGGRRVLNMRHFDVQLIGGMVLHAGKIAEMRTGEGKTLVATLPAYLNALTGKGVHVVTVNDYLARRDAEWMSRLYNFLGLSVGINLSQMPHGEKQKAYAADITYGTNNEFGFDYLRDNMVFTAEERVQRGLNYALVDEVDSILIDEARTPLIISGQADDSVDLYLQMNSIAAKLVRQEKEDGEGDFWVDEKSHQVLLSEQGHEHAEALLAEAGLLAEGSSLYDAANISLVHHMYAALRAQSLYHRDQHYVVRDGEIVIVDEFTGRMMAGRRWSDGLHQAVEAKEGVTIQKENQTLASITFQNYFRMYGKLSGMTGTADTEAYEFNQIYGLETVVIPTHRPLQRKDYMDKVYRTAKEKYQAVIDDIKECQKRGQPVLVGTTSIENSELISKVLSEAKLEHQVLNAKQHEREAHIIAQAGRPGMITIATNMAGRGTDIVLGGNPEGEIAEIEADEQLSEADKAARIAALKADWQVKHDAVLAAGGLHIIGTERHESRRVDNQLRGRAGRQGDPGSSRFYLSLEDQLLRIFASDRVGAIMERLKMPEGEAIEHPWVTRAIENAQRKVEGRNFDIRKQLLEYDDVANDQRKVIYQQRNELLEAADVGETIAAMRVDVIHDLIATYIPPESLEEQWDVPGLEKALQADLGLEIPLQKMLEENPNLHEETLREHIVEAANAAYKAKEEQASAPVLRQFERAVMLQSLDNHWREHLAALDHLRQGIHLRSYAQKNPKQEYKREAFALFSSMLDTVKREVTQVTMLVKVQSEADVEAVEKHPELENVQYQHADFDEALGNAEESDEASDQSVKTFERAGAKVGRNDPCPCGSGKKYKQCHGKLS.

ATP-binding positions include glutamine 87, 105 to 109, and aspartate 507; that span reads GEGKT. A disordered region spans residues 860–898; it reads EALGNAEESDEASDQSVKTFERAGAKVGRNDPCPCGSGK. Zn(2+)-binding residues include cysteine 892, cysteine 894, cysteine 903, and histidine 904.

It belongs to the SecA family. In terms of assembly, monomer and homodimer. Part of the essential Sec protein translocation apparatus which comprises SecA, SecYEG and auxiliary proteins SecDF-YajC and YidC. The cofactor is Zn(2+).

The protein resides in the cell inner membrane. The protein localises to the cytoplasm. It catalyses the reaction ATP + H2O + cellular proteinSide 1 = ADP + phosphate + cellular proteinSide 2.. Part of the Sec protein translocase complex. Interacts with the SecYEG preprotein conducting channel. Has a central role in coupling the hydrolysis of ATP to the transfer of proteins into and across the cell membrane, serving both as a receptor for the preprotein-SecB complex and as an ATP-driven molecular motor driving the stepwise translocation of polypeptide chains across the membrane. This chain is Protein translocase subunit SecA, found in Methylobacillus flagellatus (strain ATCC 51484 / DSM 6875 / VKM B-1610 / KT).